Here is a 216-residue protein sequence, read N- to C-terminus: uncharacterized protein (216 aa).

In terms of domain architecture, 4Fe-4S ferredoxin-type spans 18-47; that stretch reads PPDSPIEDRCGSCNICVDSCPTGALVQGGQ. [4Fe-4S] cluster is bound by residues cysteine 27, cysteine 30, cysteine 33, cysteine 37, cysteine 79, cysteine 82, and cysteine 86.

This is an uncharacterized protein from Geobacillus stearothermophilus (Bacillus stearothermophilus).